A 196-amino-acid polypeptide reads, in one-letter code: Holliday junction branch migration complex subunit RuvA (196 aa).

A domain I region spans residues 1–63 (MINKICGKIV…EDEIRLFGFL (63 aa)). Residues 64-135 (NVSEREVFEK…KLRGKLVKVN (72 aa)) form a domain II region. The interval 135-138 (NEAS) is flexible linker. Residues 139–196 (SGVLKFKELEQSIVNMGFDRKLVAAAIKEIMLIDEFLMLRQVDQEQFLFREILRKLSG) are domain III.

This sequence belongs to the RuvA family. In terms of assembly, homotetramer. Forms an RuvA(8)-RuvB(12)-Holliday junction (HJ) complex. HJ DNA is sandwiched between 2 RuvA tetramers; dsDNA enters through RuvA and exits via RuvB. An RuvB hexamer assembles on each DNA strand where it exits the tetramer. Each RuvB hexamer is contacted by two RuvA subunits (via domain III) on 2 adjacent RuvB subunits; this complex drives branch migration. In the full resolvosome a probable DNA-RuvA(4)-RuvB(12)-RuvC(2) complex forms which resolves the HJ.

Its subcellular location is the cytoplasm. In terms of biological role, the RuvA-RuvB-RuvC complex processes Holliday junction (HJ) DNA during genetic recombination and DNA repair, while the RuvA-RuvB complex plays an important role in the rescue of blocked DNA replication forks via replication fork reversal (RFR). RuvA specifically binds to HJ cruciform DNA, conferring on it an open structure. The RuvB hexamer acts as an ATP-dependent pump, pulling dsDNA into and through the RuvAB complex. HJ branch migration allows RuvC to scan DNA until it finds its consensus sequence, where it cleaves and resolves the cruciform DNA. The sequence is that of Holliday junction branch migration complex subunit RuvA from Borrelia turicatae (strain 91E135).